We begin with the raw amino-acid sequence, 287 residues long: MKDNTCTKRDFLNGTKIGGDEPFFLISGPCVMENRDLLDRVCAEMIEVCGELKIPYIFKSSFDKANRSSVNSYRGPGLAEGIKNLEYIKNKYNVPVLTDIHETSQISPLKDVIDVYQIPAFLCRQTDLISQSAQTGKWVNVKKGQFLAPADTRHIAVKMNESGNNKLLVTERGTSFGYGNLIFDGRAIPIIHGFDIPLVFDATHSAQLPGAAGNSTGGQREFIPSILRSAVSFGIEGIFMEVHPDPPNALSDATTQYPLSQIKSLLKEMIGLDRYIKKEILISRSSL.

The protein belongs to the KdsA family.

It is found in the cytoplasm. It carries out the reaction D-arabinose 5-phosphate + phosphoenolpyruvate + H2O = 3-deoxy-alpha-D-manno-2-octulosonate-8-phosphate + phosphate. It functions in the pathway carbohydrate biosynthesis; 3-deoxy-D-manno-octulosonate biosynthesis; 3-deoxy-D-manno-octulosonate from D-ribulose 5-phosphate: step 2/3. It participates in bacterial outer membrane biogenesis; lipopolysaccharide biosynthesis. The protein is 2-dehydro-3-deoxyphosphooctonate aldolase of Leptospira interrogans serogroup Icterohaemorrhagiae serovar copenhageni (strain Fiocruz L1-130).